A 522-amino-acid polypeptide reads, in one-letter code: Cytochrome P450 monooxygenase AKT7 (522 aa).

A helical membrane pass occupies residues 10-30 (LYVTCTVLAALILGYIQAMII). C452 lines the heme pocket.

This sequence belongs to the cytochrome P450 family. Heme serves as cofactor.

The protein localises to the membrane. It functions in the pathway mycotoxin biosynthesis. In terms of biological role, cytochrome P450 monooxygenase; part of the gene clusters that mediate the biosynthesis of the host-selective toxins (HSTs) AK-toxins responsible for Japanese pear black spot disease by the Japanese pear pathotype. AK-toxins are esters of 9,10-epoxy 8-hydroxy 9-methyldecatrienoic acid (EDA). On cellular level, AK-toxins affect plasma membrane of susceptible cells and cause a sudden increase in loss of K(+) after a few minutes of toxin treatment. The acyl-CoA ligase AKT1, the hydrolase AKT2 and enoyl-CoA hydratase AKT3 are all involved in the biosynthesis of the AK-, AF- and ACT-toxin common 9,10-epoxy-8-hydroxy-9-methyl-decatrienoic acid (EDA) structural moiety. Part of the EDA biosynthesis occurs in the peroxisome since these 3 enzymes are localized in peroxisomes. The exact roles of the 3 enzymes, as well as of additional AK-toxin clusters enzymes, including AKT4, AKT6 and AKTS1, have still to be elucidated. The Cytochrome P450 monooxygenase AKT7 on the other side functions to limit production of EDA and AK-toxin, probably via the catalysis of a side reaction of EDA or its precursor. The sequence is that of Cytochrome P450 monooxygenase AKT7 from Alternaria alternata (Alternaria rot fungus).